The primary structure comprises 431 residues: Putative F-box/FBD/LRR-repeat protein At3g56780 (431 aa).

The 57-residue stretch at 6-62 folds into the F-box domain; it reads CSCINELPDDLILKILSFVSTKHVVVTSLLSKKWKSLWTRVPILKYDVRDHTRFERF. LRR repeat units lie at residues 56-82, 88-113, 135-161, 162-187, 209-236, 237-262, 264-285, and 357-382; these read HTRF…HVEL, NKDI…EIDA, LKGI…HIDH, SSLF…MVIR, LEGL…HVAR, MEDF…TLEE, TSDV…SIIT, and CSER…KLEH. An FBD domain is found at 391–423; that stretch reads RWEPPSLVPECLLSSLEALEWKGYTGRYGDKDL.

This is Putative F-box/FBD/LRR-repeat protein At3g56780 from Arabidopsis thaliana (Mouse-ear cress).